The chain runs to 425 residues: Enolase (425 aa).

Gln-162 provides a ligand contact to (2R)-2-phosphoglycerate. The active-site Proton donor is Glu-204. Asp-241, Glu-282, and Asp-309 together coordinate Mg(2+). Residues Lys-334, Arg-363, Ser-364, and Lys-385 each coordinate (2R)-2-phosphoglycerate. Lys-334 functions as the Proton acceptor in the catalytic mechanism.

Belongs to the enolase family. The cofactor is Mg(2+).

It localises to the cytoplasm. Its subcellular location is the secreted. It is found in the cell surface. The enzyme catalyses (2R)-2-phosphoglycerate = phosphoenolpyruvate + H2O. It functions in the pathway carbohydrate degradation; glycolysis; pyruvate from D-glyceraldehyde 3-phosphate: step 4/5. Catalyzes the reversible conversion of 2-phosphoglycerate (2-PG) into phosphoenolpyruvate (PEP). It is essential for the degradation of carbohydrates via glycolysis. The polypeptide is Enolase (Corynebacterium glutamicum (strain R)).